The sequence spans 85 residues: Large ribosomal subunit protein bL27 (85 aa).

The segment at 1–20 (MAHKKAGGSTRNGRDSEAKR) is disordered.

Belongs to the bacterial ribosomal protein bL27 family.

The protein is Large ribosomal subunit protein bL27 of Escherichia coli O139:H28 (strain E24377A / ETEC).